A 213-amino-acid polypeptide reads, in one-letter code: Homeobox protein koza (213 aa).

The interval 24 to 72 (ILSHMGPGSKEKSLGFPKTDQDQDSSLRDTEEKYASEKLQSSSQPAEIH) is disordered. Residues 32 to 59 (SKEKSLGFPKTDQDQDSSLRDTEEKYAS) show a composition bias toward basic and acidic residues. The segment at residues 102–161 (QKRSRAAFSHSQVIELERKFSSQKYLSAPERAQLAKSLKLTETQVKIWFQNRRYKTKRKQ) is a DNA-binding region (homeobox).

It belongs to the NK-3 homeobox family. In terms of tissue distribution, expressed in the muscle layer of embryonic somites. In tailbud embryos, expressed throughout the entire myotome but at the mid-tailbud stage (stage 32), expression becomes restricted to the outer periphery of the somite so that by the tadpole stage only the outer, type I cells show expression. Also expressed in the dorsal cement gland and in the myocardial layer of the developing heart. In all tissues, expression begins after terminal differentiation.

It localises to the nucleus. May regulate cell proliferation in a tissue-specific manner. The protein is Homeobox protein koza of Xenopus laevis (African clawed frog).